The primary structure comprises 155 residues: Ribosome maturation factor RimP (155 aa).

Belongs to the RimP family.

It localises to the cytoplasm. Functionally, required for maturation of 30S ribosomal subunits. The protein is Ribosome maturation factor RimP of Agathobacter rectalis (strain ATCC 33656 / DSM 3377 / JCM 17463 / KCTC 5835 / VPI 0990) (Eubacterium rectale).